A 383-amino-acid polypeptide reads, in one-letter code: Odorant receptor 94b (383 aa).

Residues 1–41 (MESTNRLSAIQTLLVIQRWIGLLKWENEGEDGVLTWLKRIY) lie on the Cytoplasmic side of the membrane. A helical membrane pass occupies residues 42–62 (PFVLHLPLTFTYIALMWYEAI). The Extracellular portion of the chain corresponds to 63–70 (TSSDFEEA). Residues 71–91 (GQVLYMSITELALVTKLLNIW) form a helical membrane-spanning segment. Residues 92–130 (YRRHEAASLIHELQHDPAFNLRNSEEIKFWQQNQRNFKR) are Cytoplasmic-facing. Residues 131–151 (IFYWYIWGSLFVAVMGYISVF) form a helical membrane-spanning segment. The Extracellular segment spans residues 152–174 (FQEDYELPFGYYVPFEWRTRERY). Residues 175-195 (FYAWGYNVVAMTLCCLSNILL) traverse the membrane as a helical segment. Topologically, residues 196–250 (DTLGCYFMFHIASLFRLLGMRLEALKNAAEEKARPELRRIFQLHTKVRRLTRECE) are cytoplasmic. Residues 251–271 (VLVSPYVLSQVVFSAFIICFS) traverse the membrane as a helical segment. Residues 272–284 (AYRLVHMGFKQRP) lie on the Extracellular side of the membrane. Residues 285-305 (GLFVTTVQFVAVMIVQIFLPC) traverse the membrane as a helical segment. The Cytoplasmic segment spans residues 306-358 (YYGNELTFHANALTNSVFGTNWLEYSVGTRKLLNCYMEFLKRPVKVRAGVFFE). A helical membrane pass occupies residues 359–379 (IGLPIFVKTINNAYSFFALLL). Residues 380-383 (KISK) lie on the Extracellular side of the membrane.

This sequence belongs to the insect chemoreceptor superfamily. Heteromeric odorant receptor channel (TC 1.A.69) family. Or2a subfamily. In terms of assembly, interacts with Orco. Complexes exist early in the endomembrane system in olfactory sensory neurons (OSNs), coupling these complexes to the conserved ciliary trafficking pathway.

The protein resides in the cell membrane. In terms of biological role, odorant receptor which mediates acceptance or avoidance behavior, depending on its substrates. The odorant receptor repertoire encodes a large collection of odor stimuli that vary widely in identity, intensity, and duration. May form a complex with Orco to form odorant-sensing units, providing sensitive and prolonged odorant signaling and calcium permeability. The chain is Odorant receptor 94b (Or94b) from Drosophila melanogaster (Fruit fly).